The sequence spans 184 residues: Thymidine kinase (184 aa).

ATP-binding positions include 10-17 (GPMYSGKT) and 83-86 (DEVQ). The active-site Proton acceptor is Glu84. Zn(2+) is bound by residues Cys140, Cys143, Cys173, and Cys176.

The protein belongs to the thymidine kinase family. As to quaternary structure, homotetramer.

It is found in the cytoplasm. The catalysed reaction is thymidine + ATP = dTMP + ADP + H(+). The sequence is that of Thymidine kinase from Thermotoga petrophila (strain ATCC BAA-488 / DSM 13995 / JCM 10881 / RKU-1).